The following is an 81-amino-acid chain: Beta-catenin-interacting protein 1 (81 aa).

Phosphoserine is present on serine 59.

The protein belongs to the CTNNBIP1 family. As to quaternary structure, binds CTNNB1. In terms of tissue distribution, highly expressed in heart, brain, liver and skeletal muscle. Detected at low levels in kidney, testis and lung.

The protein resides in the cytoplasm. Its subcellular location is the nucleus. In terms of biological role, prevents the interaction between CTNNB1 and TCF family members, and acts as a negative regulator of the Wnt signaling pathway. The protein is Beta-catenin-interacting protein 1 (Ctnnbip1) of Mus musculus (Mouse).